Consider the following 251-residue polypeptide: uncharacterized protein (251 aa).

10–34 (ITGAGSGIGKKAAVMFAERGAKVAI) contacts NADP(+). Ser139 is a substrate binding site. Tyr152 serves as the catalytic Proton acceptor.

It belongs to the short-chain dehydrogenases/reductases (SDR) family.

This is an uncharacterized protein from Thermotoga maritima (strain ATCC 43589 / DSM 3109 / JCM 10099 / NBRC 100826 / MSB8).